We begin with the raw amino-acid sequence, 1151 residues long: SCF E3 ubiquitin ligase complex F-box protein GRR1 (1151 aa).

A compositionally biased stretch (basic and acidic residues) spans 1-18; sequence MDQDNNNHNDSNRLHPPD. Residues 1 to 72 are disordered; the sequence is MDQDNNNHND…ATSERNASEV (72 aa). Positions 38–49 are enriched in low complexity; sequence NNNNNNNNNNNN. Residues 58 to 72 show a composition bias toward basic and acidic residues; that stretch reads RTRETATSERNASEV. Residues S199 and S300 each carry the phosphoserine modification. The F-box domain maps to 314–361; it reads VFALNMLPSEILHLILDKLNQKYDIVKFLTVSKLWAEIIVKILYYRPH. LRR repeat units follow at residues 399–423, 424–449, 450–475, 476–501, 502–527, 528–553, 554–582, 583–608, 609–634, 635–660, 661–685, 686–714, and 715–740; these read GDYMHDTELNYFVGCKNLERLTLVF, CKHITSVPISAVLRGCKFLQSVDITG, IRDVSDDVFDTLATYCPRVQGFYVPQ, ARNVTFDSLRNFIVHSPMLKRIKITA, NNNMNDELVELLANKCPLLVEVDITL, SPNVTDSSLLKLLTRLVQLREFRITH, NTNITDNLFQELSKVVDDMPSLRLIDLSG, CENITDKTIESIVNLAPKLRNVFLGK, CSRITDASLFQLSKLGKNLQTVHFGH, CFNITDNGVRALFHSCTRIQYVDFAC, CTNLTNRTLYELADLPKLKRIGLVK, CTQMTDEGLLNMVSLRGRNDTLERVHLSY, and CSNLTIYPIYELLMSCPRLSHLSLTA. A compositionally biased stretch (low complexity) spans 1066–1080; sequence AGANDTSNNETNNGN. Disordered regions lie at residues 1066-1090 and 1118-1151; these read AGANDTSNNETNNGNDDNETENPNF and VRNNNNNTIDESMPDTAIDSQMDEASGTPDEDML.

As to quaternary structure, interacts with SKP1. Component of the probable SCF(GRR1) complex containing CDC53, SKP1, RBX1 and GRR1.

The protein resides in the membrane. It participates in protein modification; protein ubiquitination. In terms of biological role, substrate recognition component of a SCF (SKP1-CUL1-F-box protein) E3 ubiquitin-protein ligase complex which mediates the ubiquitination and subsequent proteasomal degradation of target proteins. Recognizes and directs ubiquitination of phosphorylated CLN1, CLN2 and GIC2. Probably constitutes the primary response element required for the generation or interpretation of the signal that induces glucose repression. This is SCF E3 ubiquitin ligase complex F-box protein GRR1 (GRR1) from Saccharomyces cerevisiae (strain ATCC 204508 / S288c) (Baker's yeast).